The following is a 1095-amino-acid chain: MAELKNRIFYNQVMDKSAIKQLIIRLVACLGRVCTAHILDQLKTLGFQYSTQTGISLGIDDLLASPLKNWILQDAENEANVSQEYCRHGYIHAVERLRQIVETWHTTSEFLKREMTVSFNILDGFNPVHMMSFSGARGNVSQVHQLVGMRGLISDPQGNIIDLPIQSNLREGLSLTEYIISCYGARKGVVDTAIRTADAGYLTRRLVEVAQHVVIRNVDCNTYEGIILRSIRTRQGNAYLTQENRIIGRVLARPLYFGKRCIAVRNQDIGPDLAAKLSIISPQAILVRSPITCKTTDWVCQLCYGWGVNQGKMVSLGEAIGVVAGQSIGEPGTQLTLRTFHTGGVFTGDIANHLRAPFNGIAHFETHNCKPTRNRHGRLVWKCLQDLTITVIGQGKKHSLNVPSQSLLLINNNQYVESKQVIAEVRASIAPIKEKVQRNIYSYLQGEVVHTRSALRLSNAFSGTILLIHHNPNTGHLWIWSGKLYQLSGQQASSIYTSEDFIQTNITVANKRYLKFDTHKISNKKVLKSVLIGKFTRFKQVKSIQTGTVRSVLIQKPDTLRMVVLSSVDQLEITMHKTPYIMEPLLTQKISNNILNLTSYPKSSTLISKQKNTVSSFASIHIKRPTIGFQFQLPIVPKIRCYSLGLLGKLQRPLQYNLVLSSPTQPIFIDRYYNTFTNWCYLNEHGNSYNLYGLQMIVLDKKLYNNNSISGLFNTYRNIPKIGQLICKGTFVQQTTQLSESGKIVSIFKHKIVLRLSQPYLLAPGTFIHPDCYDVINRGDIVITMMYEQLRTTDIIQGLPKAEQLLEARSFNEVVLKLENDFVMLTERIARQLRSLSRSYMLSTKESTKHSQIDLVNRIQTVYLSQGVRIVDKHIEIIVRQMSSKVMLVENGDPLAVSSGGLICLPLPPIGSFLPENWIEIPLSYVIDNHTFLPRELVELTRAQKINYVIQNPVAYKPVLLGITKASLNTNSFISEASFQQTARVLSKSAIKNRVDWIRGLQENVLFGRMIPAGTGCREISSQLQYGNIFQKKWAQHTKWKLFVNSFGLNLSCLQIYLHFQAYCLESTNEQPQSNLHVHNSRIFPFTTICSILKS.

Residues C220, C293, C300, and C303 each coordinate Zn(2+).

This sequence belongs to the RNA polymerase beta' chain family. RpoC2 subfamily. In plastids the minimal PEP RNA polymerase catalytic core is composed of four subunits: alpha, beta, beta', and beta''. When a (nuclear-encoded) sigma factor is associated with the core the holoenzyme is formed, which can initiate transcription. Zn(2+) is required as a cofactor.

The protein resides in the plastid. Its subcellular location is the chloroplast. It carries out the reaction RNA(n) + a ribonucleoside 5'-triphosphate = RNA(n+1) + diphosphate. Functionally, DNA-dependent RNA polymerase catalyzes the transcription of DNA into RNA using the four ribonucleoside triphosphates as substrates. In Zygnema circumcarinatum (Green alga), this protein is DNA-directed RNA polymerase subunit beta''.